A 119-amino-acid chain; its full sequence is Large ribosomal subunit protein bL19 (119 aa).

The protein belongs to the bacterial ribosomal protein bL19 family.

In terms of biological role, this protein is located at the 30S-50S ribosomal subunit interface and may play a role in the structure and function of the aminoacyl-tRNA binding site. The polypeptide is Large ribosomal subunit protein bL19 (Pelobacter propionicus (strain DSM 2379 / NBRC 103807 / OttBd1)).